The primary structure comprises 147 residues: Protein-export protein SecB (147 aa).

The protein belongs to the SecB family. As to quaternary structure, homotetramer, a dimer of dimers. One homotetramer interacts with 1 SecA dimer.

It is found in the cytoplasm. One of the proteins required for the normal export of preproteins out of the cell cytoplasm. It is a molecular chaperone that binds to a subset of precursor proteins, maintaining them in a translocation-competent state. It also specifically binds to its receptor SecA. The protein is Protein-export protein SecB of Neisseria meningitidis serogroup A / serotype 4A (strain DSM 15465 / Z2491).